The following is a 356-amino-acid chain: sn-glycerol-3-phosphate import ATP-binding protein UgpC (356 aa).

One can recognise an ABC transporter domain in the interval 4-235 (LKLQAVTKSW…PASRFVASFI (232 aa)). 37 to 44 (GPSGCGKS) contributes to the ATP binding site.

This sequence belongs to the ABC transporter superfamily. sn-glycerol-3-phosphate importer (TC 3.A.1.1.3) family. In terms of assembly, the complex is composed of two ATP-binding proteins (UgpC), two transmembrane proteins (UgpA and UgpE) and a solute-binding protein (UgpB).

It is found in the cell inner membrane. It carries out the reaction sn-glycerol 3-phosphate(out) + ATP + H2O = sn-glycerol 3-phosphate(in) + ADP + phosphate + H(+). Part of the ABC transporter complex UgpBAEC involved in sn-glycerol-3-phosphate (G3P) import. Responsible for energy coupling to the transport system. This chain is sn-glycerol-3-phosphate import ATP-binding protein UgpC, found in Salmonella paratyphi A (strain ATCC 9150 / SARB42).